The following is a 1364-amino-acid chain: Serine protease EatA (1364 aa).

The signal sequence occupies residues 1-56 (MNKVFSLKYSFLAKGFIAVSELARRVSVKGKLKSASSIIISPITIAIVSYAPPSLA). Residues 57–307 (ATVNADISYQ…VVTTQDFLHQ (251 aa)) enclose the Peptidase S6 domain. Active-site charge relay system residues include H134, D162, and S267. The Autotransporter domain maps to 1098–1364 (DSQGDAGGWA…SINANFRYYF (267 aa)).

Post-translationally, cleaved to release the mature protein from the outer membrane.

The protein localises to the periplasm. It is found in the secreted. The protein resides in the cell surface. Its subcellular location is the cell outer membrane. Its activity is regulated as follows. Inhibited by phenylmethylsulfonyl fluoride. Functionally, autotransporter serine protease probably involved in virulence. The sequence is that of Serine protease EatA (eatA) from Escherichia coli O78:H11 (strain H10407 / ETEC).